We begin with the raw amino-acid sequence, 113 residues long: Large ribosomal subunit protein uL24 (113 aa).

Belongs to the universal ribosomal protein uL24 family. Part of the 50S ribosomal subunit.

In terms of biological role, one of two assembly initiator proteins, it binds directly to the 5'-end of the 23S rRNA, where it nucleates assembly of the 50S subunit. Functionally, one of the proteins that surrounds the polypeptide exit tunnel on the outside of the subunit. The sequence is that of Large ribosomal subunit protein uL24 from Micrococcus luteus (Micrococcus lysodeikticus).